Consider the following 75-residue polypeptide: Defense protein 6 (75 aa).

The first 20 residues, 1–20 (MKTCLVFAFFLVAVFAAVQA), serve as a signal peptide directing secretion. Positions 21–32 (EENDSPQTLPRR) are excised as a propeptide. Cystine bridges form between Cys-44–Cys-63, Cys-49–Cys-68, and Cys-53–Cys-70.

This sequence belongs to the invertebrate defensin family.

It localises to the secreted. Its function is as follows. Has antibacterial activity. This Lonomia obliqua (Moth) protein is Defense protein 6.